An 837-amino-acid polypeptide reads, in one-letter code: Endo-1,4-beta-xylanase Z (837 aa).

The N-terminal stretch at 1–28 (MSRKLFSVLLVGLMLMTSLLVTISSTSA) is a signal peptide. One can recognise a CBM6 domain in the interval 299 to 420 (TRIEAEDYDG…PVNIDWFTFG (122 aa)). Positions 424 to 492 (SSTGLGDLNG…ILRIITEFPG (69 aa)) constitute a Dockerin domain. A GH10 domain is found at 512–833 (TISGNALRDY…KPAYNAIKEA (322 aa)). The active-site Proton donor is E645. Residue E754 is the Nucleophile of the active site. C783 and C789 are disulfide-bonded.

This sequence belongs to the glycosyl hydrolase 10 (cellulase F) family.

The enzyme catalyses Endohydrolysis of (1-&gt;4)-beta-D-xylosidic linkages in xylans.. This is Endo-1,4-beta-xylanase Z (xynZ) from Acetivibrio thermocellus (strain ATCC 27405 / DSM 1237 / JCM 9322 / NBRC 103400 / NCIMB 10682 / NRRL B-4536 / VPI 7372) (Clostridium thermocellum).